The sequence spans 327 residues: Aliphatic sulfonates import ATP-binding protein SsuB (327 aa).

The tract at residues Glu21–Asp54 is disordered. Over residues Val37 to Asp54 the composition is skewed to basic and acidic residues. An ABC transporter domain is found at Val66 to Leu285. ATP is bound at residue Gly98–Ser105. The segment at Ala300–Val327 is disordered.

It belongs to the ABC transporter superfamily. Aliphatic sulfonates importer (TC 3.A.1.17.2) family. As to quaternary structure, the complex is composed of two ATP-binding proteins (SsuB), two transmembrane proteins (SsuC) and a solute-binding protein (SsuA).

The protein resides in the cell inner membrane. The enzyme catalyses ATP + H2O + aliphatic sulfonate-[sulfonate-binding protein]Side 1 = ADP + phosphate + aliphatic sulfonateSide 2 + [sulfonate-binding protein]Side 1.. Part of the ABC transporter complex SsuABC involved in aliphatic sulfonates import. Responsible for energy coupling to the transport system. In Burkholderia pseudomallei (strain K96243), this protein is Aliphatic sulfonates import ATP-binding protein SsuB.